The sequence spans 121 residues: Large ribosomal subunit protein eL8 (121 aa).

Belongs to the eukaryotic ribosomal protein eL8 family. As to quaternary structure, part of the 50S ribosomal subunit. Probably part of the RNase P complex.

It is found in the cytoplasm. Multifunctional RNA-binding protein that recognizes the K-turn motif in ribosomal RNA, the RNA component of RNase P, box H/ACA, box C/D and box C'/D' sRNAs. This chain is Large ribosomal subunit protein eL8, found in Thermoplasma acidophilum (strain ATCC 25905 / DSM 1728 / JCM 9062 / NBRC 15155 / AMRC-C165).